A 624-amino-acid chain; its full sequence is Plastin-2 (624 aa).

EF-hand domains lie at 9–44 (EEMEELREAFTKVDVDGNGHISTDELNALFKAANLP) and 49–84 (RVREIIQEISRTMDLNQDGKITFDEFAKVVHDLKSS). Residues Asp-22, Asp-24, Asn-26, His-28, Glu-33, Asp-62, Asn-64, Asp-66, Lys-68, and Glu-73 each contribute to the Ca(2+) site. 4 consecutive Calponin-homology (CH) domains span residues 118–234 (EEEK…KIGL), 262–373 (LSPE…NKYP), 392–501 (TREE…RRYT), and 513–621 (KIID…ARGM). 2 actin-binding regions span residues 118–373 (EEEK…NKYP) and 392–621 (TREE…ARGM).

In terms of assembly, monomer. Expressed by macrophages (at protein level).

The protein localises to the cytoplasm. Its subcellular location is the cytoskeleton. The protein resides in the cell junction. It localises to the cell projection. It is found in the ruffle membrane. Its function is as follows. Actin-binding protein. Plays a role in the activation of T-cells. This chain is Plastin-2, found in Danio rerio (Zebrafish).